A 211-amino-acid chain; its full sequence is Small ribosomal subunit protein uS3 (211 aa).

Residues 16-85 enclose the KH type-2 domain; that stretch reads IDEYFKTKLV…NPQIEVKQVE (70 aa).

This sequence belongs to the universal ribosomal protein uS3 family. In terms of assembly, part of the 30S ribosomal subunit.

Its function is as follows. Binds the lower part of the 30S subunit head. This is Small ribosomal subunit protein uS3 from Methanococcus maripaludis (strain C7 / ATCC BAA-1331).